The chain runs to 504 residues: 2,3-bisphosphoglycerate-independent phosphoglycerate mutase (504 aa).

The Mn(2+) site is built by Asp11 and Ser61. Ser61 serves as the catalytic Phosphoserine intermediate. Substrate-binding positions include His122, 152 to 153 (RD), Arg183, Arg189, 255 to 258 (RNDR), and Lys329. Asp396, His400, Asp437, His438, and His455 together coordinate Mn(2+).

Belongs to the BPG-independent phosphoglycerate mutase family. In terms of assembly, monomer. Mn(2+) is required as a cofactor.

It catalyses the reaction (2R)-2-phosphoglycerate = (2R)-3-phosphoglycerate. It functions in the pathway carbohydrate degradation; glycolysis; pyruvate from D-glyceraldehyde 3-phosphate: step 3/5. Its function is as follows. Catalyzes the interconversion of 2-phosphoglycerate and 3-phosphoglycerate. In Bacteroides fragilis (strain YCH46), this protein is 2,3-bisphosphoglycerate-independent phosphoglycerate mutase.